The primary structure comprises 381 residues: MNMAQTVTQNPRGVKTLLPLDVELRNVFKFFNQEPAVHGVDLDVRQGEFFSILGPSGCGKTTTLRLIAGFEQVDAGKLLIQGQPMTNIPPYRRPVNTVFQSYALFNHLNVWDNVAFGLRLKKSRKSEVESRVKEALKLVKMESLRSRFPSQLSGGQQQRVALARALVNRPAVVLLDEPLGALDLKLRKEMQVELSNLHKNLGLTFVMVTHDQEEALSLSDRIAVMNQGKIEQIGTPQEIYERPKTSFVADFIGDTNLFSGEITVLEAEYIQIVTKTGLTIVVARNEDTPAELLKPVVVSVRPEKIQLSLYPPSSLNNCFEGRLINVMYLGTHVNYVVQLINGMNINVLQPNTFGNLPDRETPIYAWWAESDCLAINQMTND.

Residues V22–I252 enclose the ABC transporter domain. G54–T61 is an ATP binding site.

The protein belongs to the ABC transporter superfamily. Spermidine/putrescine importer (TC 3.A.1.11.1) family. As to quaternary structure, the complex is composed of two ATP-binding proteins (PotA), two transmembrane proteins (PotB and PotC) and a solute-binding protein (PotD).

It localises to the cell inner membrane. It catalyses the reaction ATP + H2O + polyamine-[polyamine-binding protein]Side 1 = ADP + phosphate + polyamineSide 2 + [polyamine-binding protein]Side 1.. In terms of biological role, part of the ABC transporter complex PotABCD involved in spermidine/putrescine import. Responsible for energy coupling to the transport system. This is Spermidine/putrescine import ATP-binding protein PotA from Nostoc sp. (strain PCC 7120 / SAG 25.82 / UTEX 2576).